We begin with the raw amino-acid sequence, 271 residues long: Undecaprenyl-diphosphatase 2 (271 aa).

8 consecutive transmembrane segments (helical) span residues 1–21, 46–66, 88–108, 111–131, 146–166, 190–210, 220–240, and 251–271; these read MNFFQAIILAIAQGVSELFPI, NFLEFVVMMHIGTTISLIVYF, ALIVIGTIPAIILGAIFEQTI, AFSDVIVASIFLIFNGLLLFF, LKGWQALVIGCFQSLALIPGF, SMLLSTPMVAGAATLEIPKLI, LSLIGGIVAGLAAFLSIYILM, and MLPFAIYCIVIGIGVLASKAI.

The protein belongs to the UppP family.

The protein resides in the cell membrane. The catalysed reaction is di-trans,octa-cis-undecaprenyl diphosphate + H2O = di-trans,octa-cis-undecaprenyl phosphate + phosphate + H(+). Its function is as follows. Catalyzes the dephosphorylation of undecaprenyl diphosphate (UPP). Confers resistance to bacitracin. The chain is Undecaprenyl-diphosphatase 2 from Oenococcus oeni (strain ATCC BAA-331 / PSU-1).